Reading from the N-terminus, the 288-residue chain is Small ribosomal subunit protein uS2 (288 aa).

It belongs to the universal ribosomal protein uS2 family. As to quaternary structure, component of the small ribosomal subunit. Mature ribosomes consist of a small (40S) and a large (60S) subunit. The 40S subunit contains about 33 different proteins and 1 molecule of RNA (18S). The 60S subunit contains about 49 different proteins and 3 molecules of RNA (28S, 5.8S and 5S). Interacts with ribosomal protein S21.

Its subcellular location is the cytoplasm. Functionally, required for the assembly and/or stability of the 40S ribosomal subunit. Required for the processing of the 20S rRNA-precursor to mature 18S rRNA in a late step of the maturation of 40S ribosomal subunits. In Aedes aegypti (Yellowfever mosquito), this protein is Small ribosomal subunit protein uS2.